The following is an 856-amino-acid chain: Phosphoenolpyruvate synthase (856 aa).

The active-site Tele-phosphohistidine intermediate is the His-433. Substrate is bound by residues Arg-523, Arg-636, Glu-738, Gly-759, Ser-760, Asn-761, and Asp-762. Residue Glu-738 coordinates Mg(2+). Asp-762 is a binding site for Mg(2+). Cys-809 (proton donor) is an active-site residue.

The protein belongs to the PEP-utilizing enzyme family. The cofactor is Mg(2+).

The enzyme catalyses pyruvate + ATP + H2O = phosphoenolpyruvate + AMP + phosphate + 2 H(+). It participates in carbohydrate biosynthesis; gluconeogenesis. In terms of biological role, catalyzes the phosphorylation of pyruvate to phosphoenolpyruvate. This chain is Phosphoenolpyruvate synthase (ppsA), found in Aquifex aeolicus (strain VF5).